Consider the following 633-residue polypeptide: ABC transporter G family member 1 (633 aa).

The ABC transporter domain occupies 23–265; it reads LTWEDLWVTA…FALSGFPCPT (243 aa). 60-67 serves as a coordination point for ATP; that stretch reads GPSGSGKS. Residues 340–552 form the ABC transmembrane type-2 domain; the sequence is TQSLVLTRRS…AYEGMFKNEF (213 aa). An N-linked (GlcNAc...) asparagine glycan is attached at Asn352. Helical transmembrane passes span 364-384, 394-414, 440-460, 470-490, 498-518, and 580-600; these read LAVY…VGFS, MLMF…PSFV, LSAM…AYFM, FIYF…LMMI, FLMG…SGGF, and IDLV…LLVV.

Belongs to the ABC transporter superfamily. ABCG family. In terms of assembly, homodimer. Restricted to the petals, with the highest expression in the limb and, to a lesser extent, in petal tubes, probably in both epidermal and mesophyll cell layers.

Its subcellular location is the cell membrane. Its function is as follows. ABC transporter controlling the release of volatile organic compounds (VOCs), including floral volatile benzenoids and phenylpropanoids (FVBP), in flowers of fragrant cultivars (e.g. cv. Mitchell and cv. V26). This scent, mostly produced in the evening and night by the petals, attracts the pollinators (e.g. the night-active hawkmoth pollinator Manduca sexta). The polypeptide is ABC transporter G family member 1 (Petunia hybrida (Petunia)).